We begin with the raw amino-acid sequence, 219 residues long: 2-hydroxy-3-keto-5-methylthiopentenyl-1-phosphate phosphatase (219 aa).

Belongs to the HAD-like hydrolase superfamily. MtnX family.

The catalysed reaction is 2-hydroxy-5-methylsulfanyl-3-oxopent-1-enyl phosphate + H2O = 1,2-dihydroxy-5-(methylsulfanyl)pent-1-en-3-one + phosphate. It functions in the pathway amino-acid biosynthesis; L-methionine biosynthesis via salvage pathway; L-methionine from S-methyl-5-thio-alpha-D-ribose 1-phosphate: step 4/6. Dephosphorylates 2-hydroxy-3-keto-5-methylthiopentenyl-1-phosphate (HK-MTPenyl-1-P) yielding 1,2-dihydroxy-3-keto-5-methylthiopentene (DHK-MTPene). This is 2-hydroxy-3-keto-5-methylthiopentenyl-1-phosphate phosphatase from Exiguobacterium sibiricum (strain DSM 17290 / CCUG 55495 / CIP 109462 / JCM 13490 / 255-15).